A 673-amino-acid polypeptide reads, in one-letter code: Hemocyanin subunit C (673 aa).

An N-terminal signal peptide occupies residues 1–20 (MGAWKVWTFFAIALVVAVKA). 3 residues coordinate Cu cation: His-207, His-211, and His-237. The N-linked (GlcNAc...) asparagine glycan is linked to Asn-323. Cu cation is bound by residues His-358, His-362, and His-398. Residues Cys-568 and Cys-616 are joined by a disulfide bond.

It belongs to the tyrosinase family. Hemocyanin subfamily. 36-chain polymer consisting of 6 hexamers, each of which includes 4 different chains, A, B, C and D. Hemolymph.

The protein localises to the secreted. It is found in the extracellular space. Hemocyanins are copper-containing oxygen carriers occurring freely dissolved in the hemolymph of many mollusks and arthropods. The sequence is that of Hemocyanin subunit C (HCC) from Scutigera coleoptrata (House centipede).